Reading from the N-terminus, the 96-residue chain is Probable quinol oxidase subunit 4 (96 aa).

3 consecutive transmembrane segments (helical) span residues 8-28 (TVGF…TLYT), 37-57 (TIIF…FMHL), and 68-88 (FKVI…YWVM).

This sequence belongs to the cytochrome c oxidase bacterial subunit 4 family.

The protein localises to the cell membrane. The catalysed reaction is 2 a quinol + O2 = 2 a quinone + 2 H2O. Catalyzes quinol oxidation with the concomitant reduction of oxygen to water. The polypeptide is Probable quinol oxidase subunit 4 (qoxD) (Staphylococcus haemolyticus (strain JCSC1435)).